The primary structure comprises 129 residues: Small ribosomal subunit protein uS11 (129 aa).

This sequence belongs to the universal ribosomal protein uS11 family. In terms of assembly, part of the 30S ribosomal subunit. Interacts with proteins S7 and S18. Binds to IF-3.

In terms of biological role, located on the platform of the 30S subunit, it bridges several disparate RNA helices of the 16S rRNA. Forms part of the Shine-Dalgarno cleft in the 70S ribosome. The polypeptide is Small ribosomal subunit protein uS11 (Marinobacter nauticus (strain ATCC 700491 / DSM 11845 / VT8) (Marinobacter aquaeolei)).